The chain runs to 1105 residues: Serine/threonine-protein kinase 4 homolog B (1105 aa).

Residues phenylalanine 23–phenylalanine 274 form the Protein kinase domain. Residues leucine 29–valine 37 and lysine 52 each bind ATP. The Proton acceptor role is filled by aspartate 142. 3 disordered regions span residues serine 348–asparagine 396, serine 411–alanine 482, and proline 495–leucine 541. Low complexity-rich tracts occupy residues glutamine 358 to asparagine 396 and serine 411 to asparagine 437. Residues aspartate 438–glutamine 458 show a composition bias toward polar residues. Low complexity-rich tracts occupy residues asparagine 459–serine 473 and proline 513–leucine 541. A calpain-like cysteine protease-like region spans residues serine 516–asparagine 1105. Domain III stretches follow at residues glutamate 641 to phenylalanine 668, valine 791 to isoleucine 830, serine 836 to glutamine 972, and valine 1076 to tyrosine 1103.

In the N-terminal section; belongs to the protein kinase superfamily. STE Ser/Thr protein kinase family. STE20 subfamily. It in the C-terminal section; belongs to the peptidase C2 family. It depends on Mn(2+) as a cofactor.

The enzyme catalyses L-seryl-[protein] + ATP = O-phospho-L-seryl-[protein] + ADP + H(+). It catalyses the reaction L-threonyl-[protein] + ATP = O-phospho-L-threonyl-[protein] + ADP + H(+). Its function is as follows. Probable serine/threonine-protein kinase. The polypeptide is Serine/threonine-protein kinase 4 homolog B (krsB) (Dictyostelium discoideum (Social amoeba)).